The sequence spans 516 residues: GMP synthase [glutamine-hydrolyzing] (516 aa).

Residues 8 to 198 (KILILDFGSQ…VVNICGCDTL (191 aa)) form the Glutamine amidotransferase type-1 domain. Catalysis depends on C84, which acts as the Nucleophile. Catalysis depends on residues H172 and E174. In terms of domain architecture, GMPS ATP-PPase spans 199 to 391 (WNIENIIEND…LGLPYNMLYR (193 aa)). ATP is bound at residue 226 to 232 (SGGVDSS).

As to quaternary structure, homodimer.

It catalyses the reaction XMP + L-glutamine + ATP + H2O = GMP + L-glutamate + AMP + diphosphate + 2 H(+). It functions in the pathway purine metabolism; GMP biosynthesis; GMP from XMP (L-Gln route): step 1/1. Its function is as follows. Catalyzes the synthesis of GMP from XMP. The protein is GMP synthase [glutamine-hydrolyzing] of Francisella tularensis subsp. holarctica (strain LVS).